The chain runs to 397 residues: tRNA pseudouridine synthase D (397 aa).

D76 acts as the Nucleophile in catalysis. In terms of domain architecture, TRUD spans 151-361; it reads GVPNFFGEQR…MEGERRPLRV (211 aa).

It belongs to the pseudouridine synthase TruD family.

The catalysed reaction is uridine(13) in tRNA = pseudouridine(13) in tRNA. Functionally, responsible for synthesis of pseudouridine from uracil-13 in transfer RNAs. In Geotalea daltonii (strain DSM 22248 / JCM 15807 / FRC-32) (Geobacter daltonii), this protein is tRNA pseudouridine synthase D.